A 503-amino-acid chain; its full sequence is ATP synthase subunit alpha (503 aa).

170–177 (GDRKTGKT) contributes to the ATP binding site.

This sequence belongs to the ATPase alpha/beta chains family. As to quaternary structure, F-type ATPases have 2 components, CF(1) - the catalytic core - and CF(0) - the membrane proton channel. CF(1) has five subunits: alpha(3), beta(3), gamma(1), delta(1), epsilon(1). CF(0) has four main subunits: a, b, b' and c.

It localises to the cellular thylakoid membrane. The enzyme catalyses ATP + H2O + 4 H(+)(in) = ADP + phosphate + 5 H(+)(out). In terms of biological role, produces ATP from ADP in the presence of a proton gradient across the membrane. The alpha chain is a regulatory subunit. The protein is ATP synthase subunit alpha of Gloeothece citriformis (strain PCC 7424) (Cyanothece sp. (strain PCC 7424)).